Here is a 202-residue protein sequence, read N- to C-terminus: Thymidylate kinase (202 aa).

Position 13 to 20 (13 to 20) interacts with ATP; sequence GTDGAGKS.

This sequence belongs to the thymidylate kinase family.

The enzyme catalyses dTMP + ATP = dTDP + ADP. Phosphorylation of dTMP to form dTDP in both de novo and salvage pathways of dTTP synthesis. This is Thymidylate kinase from Desulfotalea psychrophila (strain LSv54 / DSM 12343).